The chain runs to 130 residues: Small ribosomal subunit protein uS8 (130 aa).

This sequence belongs to the universal ribosomal protein uS8 family. In terms of assembly, part of the 30S ribosomal subunit. Contacts proteins S5 and S12.

Its function is as follows. One of the primary rRNA binding proteins, it binds directly to 16S rRNA central domain where it helps coordinate assembly of the platform of the 30S subunit. The polypeptide is Small ribosomal subunit protein uS8 (Buchnera aphidicola subsp. Schizaphis graminum (strain Sg)).